A 463-amino-acid polypeptide reads, in one-letter code: MVSKNQFYQNWTMQSQQQHPHQMQQQFQQQQQPNLQHRNNQSNNNNCNNNPRAAAAPYRKPFRSGKINSGPGGNGNGNRVNGNNQMMFSSSQMPSDPLYIDFSSPPPGFKHNQVGSPKKKSMKGIKQQQHPSPNQQQPPSPNQQQHPSPNQQQHPSPNQQQHPNSNQQQHLSPNQQQGKMNNQNNNHMNQSQQPFNNQMNGSDWQRHPGNNPNQIRGGFNGFQRGPPPNRPPPRLMMGPPMGPMGPGPRGPGPMGPGGPYPQMPFPPPVPGMRGPGPMGPMGGPPPPPPPLFMRRNGPGPGPMMGVPPPMHMMGPRMPPRGIPPVGPYGPMNMNGGRIMKPNPKLIKQVVKGKSSIKTLKNLINQYPIEKPWVTDEIRSEHDKKVDIENRLKGHKDDELFAQYKGQRDKFVSLYEAAREEYLKQEAATVKAKDAKSDKDKNAISSQSAAPKAGSAKDATIPNP.

Over residues 1–13 (MVSKNQFYQNWTM) the composition is skewed to polar residues. The interval 1–304 (MVSKNQFYQN…RNGPGPGPMM (304 aa)) is disordered. The span at 14 to 50 (QSQQQHPHQMQQQFQQQQQPNLQHRNNQSNNNNCNNN) shows a compositional bias: low complexity. The span at 85 to 94 (QMMFSSSQMP) shows a compositional bias: polar residues. Repeat copies occupy residues 87 to 94 (MFSSSQMP), 95 to 102 (SDPLYIDF), 103 to 110 (SSPPPGFK), 111 to 118 (HNQVGSPK), 119 to 126 (KKSMKGIK), 127 to 134 (QQQHPSPN), and 135 to 142 (QQQPPSPN). The segment at 87 to 142 (MFSSSQMPSDPLYIDFSSPPPGFKHNQVGSPKKKSMKGIKQQQHPSPNQQQPPSPN) is 7 X approximate tandem repeats. Positions 142 to 193 (NQQQHPSPNQQQHPSPNQQQHPNSNQQQHLSPNQQQGKMNNQNNNHMNQSQQ) are enriched in low complexity. The segment covering 194–214 (PFNNQMNGSDWQRHPGNNPNQ) has biased composition (polar residues). 2 stretches are compositionally biased toward pro residues: residues 225-270 (GPPP…PPVP) and 282-291 (GGPPPPPPPL). Residues 397-416 (DELFAQYKGQRDKFVSLYEA) constitute a DNA-binding region (H-T-H motif). The segment at 426 to 463 (AATVKAKDAKSDKDKNAISSQSAAPKAGSAKDATIPNP) is disordered. Residues 430-441 (KAKDAKSDKDKN) show a composition bias toward basic and acidic residues.

In terms of assembly, interacts (via N-terminus) with sqd; the interaction is direct and may be involved in localization of sqd to the oocyte during oogenesis.

Its subcellular location is the nucleus. Its function is as follows. May be involved in localization of sqd to the oocyte during oogenesis. In Drosophila melanogaster (Fruit fly), this protein is DNA-binding protein K10 (fs(1)K10).